The following is a 328-amino-acid chain: Zinc transporter ZIP13 (328 aa).

Over 1 to 7 (MPGCPCP) the chain is Lumenal. A helical transmembrane segment spans residues 8–28 (GCGMAGPRLLFLTALALELLG). The Cytoplasmic segment spans residues 29–68 (RAGGSQPALRSRGTATACRLDNKESESWGALLSGERLDTW). Residues 69-89 (ICSLLGSLMVGLSGVFPLLVI) form a helical membrane-spanning segment. Residues 90–108 (PLEMGTMLRSEAGAWHLKQ) are Lumenal-facing. A helical membrane pass occupies residues 109-129 (LLSFALGGLLGNVFLHLLPEA). Residues 130 to 149 (WAYTCSASPGGEGQSLQQQQ) lie on the Cytoplasmic side of the membrane. A helical transmembrane segment spans residues 150–170 (QLGLWVIAGILTFLALEKMFL). The Lumenal segment spans residues 171-199 (DSKEEGTSQVSGYLNLLANTIDNFTHGLA). Residues 200 to 220 (VAASFLVSKKIGLLTTMAILL) form a helical membrane-spanning segment. Residues 221–226 (HEIPHE) carry the XEXPHE-motif motif. The Cytoplasmic segment spans residues 221-242 (HEIPHEVGDFAILLRAGFDRWS). A helical transmembrane segment spans residues 243 to 263 (AAKLQLSTALGGLLGAGFAIC). Residues 264 to 273 (TQSPKGVEET) are Lumenal-facing. A helical transmembrane segment spans residues 274–294 (AAWVLPFTSGGFLYIALVNVL). Residues 295-306 (PDLLEEEDPWRS) are Cytoplasmic-facing. Residues 307–327 (LQQLLLLCAGIVVMVLFSLFV) traverse the membrane as a helical segment. A topological domain (lumenal) is located at residue D328.

It belongs to the ZIP transporter (TC 2.A.5) family. Homodimer.

Its subcellular location is the golgi apparatus membrane. It is found in the cytoplasmic vesicle membrane. The protein localises to the endoplasmic reticulum membrane. The catalysed reaction is Zn(2+)(in) = Zn(2+)(out). Functions as a zinc transporter transporting Zn(2+) from the Golgi apparatus to the cytosol and thus influences the zinc level at least in areas of the cytosol. May regulate beige adipocyte differentiation. The polypeptide is Zinc transporter ZIP13 (Pongo abelii (Sumatran orangutan)).